Consider the following 89-residue polypeptide: UPF0473 protein Helmi_02360 (89 aa).

Belongs to the UPF0473 family.

The chain is UPF0473 protein Helmi_02360 from Heliobacterium modesticaldum (strain ATCC 51547 / Ice1).